Here is a 208-residue protein sequence, read N- to C-terminus: uncharacterized protein (208 aa).

This is an uncharacterized protein from Bacillus subtilis (strain 168).